Here is a 508-residue protein sequence, read N- to C-terminus: Photosystem II CP47 reaction center protein (508 aa).

Transmembrane regions (helical) follow at residues 21 to 36, 101 to 115, 140 to 156, 203 to 218, 237 to 252, and 457 to 472; these read SVHI…WAGS, IILA…MWHW, GIHL…FGAF, IAAG…FHLS, VLSS…AFVV, and CFAL…HGAR.

It belongs to the PsbB/PsbC family. PsbB subfamily. As to quaternary structure, PSII is composed of 1 copy each of membrane proteins PsbA, PsbB, PsbC, PsbD, PsbE, PsbF, PsbH, PsbI, PsbJ, PsbK, PsbL, PsbM, PsbT, PsbX, PsbY, PsbZ, Psb30/Ycf12, at least 3 peripheral proteins of the oxygen-evolving complex and a large number of cofactors. It forms dimeric complexes. Binds multiple chlorophylls. PSII binds additional chlorophylls, carotenoids and specific lipids. is required as a cofactor.

Its subcellular location is the plastid. The protein resides in the chloroplast thylakoid membrane. One of the components of the core complex of photosystem II (PSII). It binds chlorophyll and helps catalyze the primary light-induced photochemical processes of PSII. PSII is a light-driven water:plastoquinone oxidoreductase, using light energy to abstract electrons from H(2)O, generating O(2) and a proton gradient subsequently used for ATP formation. In Mesostigma viride (Green alga), this protein is Photosystem II CP47 reaction center protein.